The following is a 417-amino-acid chain: Serine hydroxymethyltransferase (417 aa).

(6S)-5,6,7,8-tetrahydrofolate-binding positions include Leu112 and 116-118 (GHL). At Lys221 the chain carries N6-(pyridoxal phosphate)lysine. Residue Glu247 coordinates (6S)-5,6,7,8-tetrahydrofolate.

Belongs to the SHMT family. As to quaternary structure, homodimer. It depends on pyridoxal 5'-phosphate as a cofactor.

It localises to the cytoplasm. It catalyses the reaction (6R)-5,10-methylene-5,6,7,8-tetrahydrofolate + glycine + H2O = (6S)-5,6,7,8-tetrahydrofolate + L-serine. The protein operates within one-carbon metabolism; tetrahydrofolate interconversion. It participates in amino-acid biosynthesis; glycine biosynthesis; glycine from L-serine: step 1/1. Catalyzes the reversible interconversion of serine and glycine with tetrahydrofolate (THF) serving as the one-carbon carrier. This reaction serves as the major source of one-carbon groups required for the biosynthesis of purines, thymidylate, methionine, and other important biomolecules. Also exhibits THF-independent aldolase activity toward beta-hydroxyamino acids, producing glycine and aldehydes, via a retro-aldol mechanism. The chain is Serine hydroxymethyltransferase from Borrelia hermsii (strain HS1 / DAH).